The sequence spans 359 residues: MKMTFRWFGEGYDSISLDKIRQIPGKPGIVSAIYDVPVGEVWPEEKIKKLKETVENAGLELEVIESVNVHEDIKLGLPSRDRYIENYQQTLRNLAKFGIKVVCYNFMPIFDWTRSDLAKVLPDGSTALSYEEEKVQKVDPNRMVEEVEANSNGFELPGWEPERLKTLKVLFEQYKSVDEEKLLKNLGYFLRAIIPVAEEVDIKMAIHPDDPPWSIFGLPRIVKSKESLEKIMALVDSPYNGITLCSGSLGANPDNDIPALIRYFGAKGRIHFGHVRNIKIHSLRNFDESSHLSSDGSLDMFEIMKAYHDIDFKGYIRPDHGRMIWGEVGRPGYGLYDRALGIAYLNGLWEAIGKMKKVC.

This sequence belongs to the mannonate dehydratase family. Requires Fe(2+) as cofactor. Mn(2+) is required as a cofactor.

The catalysed reaction is D-mannonate = 2-dehydro-3-deoxy-D-gluconate + H2O. The protein operates within carbohydrate metabolism; pentose and glucuronate interconversion. Catalyzes the dehydration of D-mannonate. In Moorella thermoacetica (strain ATCC 39073 / JCM 9320), this protein is Mannonate dehydratase.